Here is a 248-residue protein sequence, read N- to C-terminus: Probable transcriptional regulator LumQ (248 aa).

The 99-residue stretch at 148–246 (VLIDNYIEQH…GMSPTRYQFF (99 aa)) folds into the HTH araC/xylS-type domain. 2 consecutive DNA-binding regions (H-T-H motif) follow at residues 165 to 186 (AELS…KSQM) and 213 to 236 (LSQV…RRLY).

Probable transcriptional regulator. Its target gene(s) is not yet known. This chain is Probable transcriptional regulator LumQ (lumQ), found in Photobacterium leiognathi.